The following is a 196-amino-acid chain: Putative 3-methyladenine DNA glycosylase (196 aa).

It belongs to the DNA glycosylase MPG family.

The polypeptide is Putative 3-methyladenine DNA glycosylase (Chlorobium phaeovibrioides (strain DSM 265 / 1930) (Prosthecochloris vibrioformis (strain DSM 265))).